The chain runs to 427 residues: Trigger factor (427 aa).

Residues 163–248 (GDTVILDFEG…LHEIKTKEVP (86 aa)) form the PPIase FKBP-type domain.

The protein belongs to the FKBP-type PPIase family. Tig subfamily.

The protein localises to the cytoplasm. The catalysed reaction is [protein]-peptidylproline (omega=180) = [protein]-peptidylproline (omega=0). Its function is as follows. Involved in protein export. Acts as a chaperone by maintaining the newly synthesized protein in an open conformation. Functions as a peptidyl-prolyl cis-trans isomerase. This is Trigger factor from Listeria monocytogenes serotype 4b (strain CLIP80459).